The primary structure comprises 478 residues: Proline--tRNA ligase (478 aa).

It belongs to the class-II aminoacyl-tRNA synthetase family. ProS type 3 subfamily. As to quaternary structure, homodimer.

The protein resides in the cytoplasm. The enzyme catalyses tRNA(Pro) + L-proline + ATP = L-prolyl-tRNA(Pro) + AMP + diphosphate. In terms of biological role, catalyzes the attachment of proline to tRNA(Pro) in a two-step reaction: proline is first activated by ATP to form Pro-AMP and then transferred to the acceptor end of tRNA(Pro). This Clostridium botulinum (strain Kyoto / Type A2) protein is Proline--tRNA ligase.